Reading from the N-terminus, the 89-residue chain is Elongation factor 1-beta (89 aa).

This sequence belongs to the EF-1-beta/EF-1-delta family.

Its function is as follows. Promotes the exchange of GDP for GTP in EF-1-alpha/GDP, thus allowing the regeneration of EF-1-alpha/GTP that could then be used to form the ternary complex EF-1-alpha/GTP/AAtRNA. The polypeptide is Elongation factor 1-beta (Methanosarcina barkeri (strain Fusaro / DSM 804)).